The sequence spans 253 residues: Ubiquinone/menaquinone biosynthesis C-methyltransferase UbiE (253 aa).

S-adenosyl-L-methionine contacts are provided by residues Thr76, Asp97, and 125-126 (NA).

This sequence belongs to the class I-like SAM-binding methyltransferase superfamily. MenG/UbiE family.

The enzyme catalyses a 2-demethylmenaquinol + S-adenosyl-L-methionine = a menaquinol + S-adenosyl-L-homocysteine + H(+). It carries out the reaction a 2-methoxy-6-(all-trans-polyprenyl)benzene-1,4-diol + S-adenosyl-L-methionine = a 5-methoxy-2-methyl-3-(all-trans-polyprenyl)benzene-1,4-diol + S-adenosyl-L-homocysteine + H(+). It functions in the pathway quinol/quinone metabolism; menaquinone biosynthesis; menaquinol from 1,4-dihydroxy-2-naphthoate: step 2/2. Its pathway is cofactor biosynthesis; ubiquinone biosynthesis. Its function is as follows. Methyltransferase required for the conversion of demethylmenaquinol (DMKH2) to menaquinol (MKH2) and the conversion of 2-polyprenyl-6-methoxy-1,4-benzoquinol (DDMQH2) to 2-polyprenyl-3-methyl-6-methoxy-1,4-benzoquinol (DMQH2). This chain is Ubiquinone/menaquinone biosynthesis C-methyltransferase UbiE, found in Bradyrhizobium diazoefficiens (strain JCM 10833 / BCRC 13528 / IAM 13628 / NBRC 14792 / USDA 110).